Reading from the N-terminus, the 280-residue chain is S-methyl-5'-thioadenosine phosphorylase (280 aa).

Residues S18, 60 to 61 (RH), and 93 to 94 (TA) each bind phosphate. M196 contributes to the substrate binding site. T197 provides a ligand contact to phosphate. A substrate-binding site is contributed by 220–222 (DYD).

This sequence belongs to the PNP/MTAP phosphorylase family. MTAP subfamily. As to quaternary structure, homotrimer.

The protein resides in the cytoplasm. The protein localises to the nucleus. The enzyme catalyses S-methyl-5'-thioadenosine + phosphate = 5-(methylsulfanyl)-alpha-D-ribose 1-phosphate + adenine. The protein operates within amino-acid biosynthesis; L-methionine biosynthesis via salvage pathway; S-methyl-5-thio-alpha-D-ribose 1-phosphate from S-methyl-5'-thioadenosine (phosphorylase route): step 1/1. Catalyzes the reversible phosphorylation of S-methyl-5'-thioadenosine (MTA) to adenine and 5-methylthioribose-1-phosphate. Involved in the breakdown of MTA, a major by-product of polyamine biosynthesis. Responsible for the first step in the methionine salvage pathway after MTA has been generated from S-adenosylmethionine. Has broad substrate specificity with 6-aminopurine nucleosides as preferred substrates. This chain is S-methyl-5'-thioadenosine phosphorylase, found in Ciona intestinalis (Transparent sea squirt).